An 876-amino-acid chain; its full sequence is Alanine--tRNA ligase (876 aa).

Position 74 is an N6-acetyllysine (Lys-74). 4 residues coordinate Zn(2+): His-564, His-568, Cys-666, and His-670.

The protein belongs to the class-II aminoacyl-tRNA synthetase family. In terms of assembly, homotetramer. Requires Zn(2+) as cofactor.

The protein resides in the cytoplasm. The catalysed reaction is tRNA(Ala) + L-alanine + ATP = L-alanyl-tRNA(Ala) + AMP + diphosphate. Catalyzes the attachment of alanine to tRNA(Ala) in a two-step reaction: alanine is first activated by ATP to form Ala-AMP and then transferred to the acceptor end of tRNA(Ala). Also edits incorrectly charged Ser-tRNA(Ala) and Gly-tRNA(Ala) via its editing domain. The polypeptide is Alanine--tRNA ligase (Shigella dysenteriae serotype 1 (strain Sd197)).